A 147-amino-acid polypeptide reads, in one-letter code: Siroheme decarboxylase NirG subunit (147 aa).

Belongs to the Ahb/Nir family. Probably forms a complex composed of NirD, NirL, NirG and NirH. All proteins are required for the total conversion of siroheme to didecarboxysiroheme.

The enzyme catalyses siroheme + 2 H(+) = 12,18-didecarboxysiroheme + 2 CO2. It participates in porphyrin-containing compound metabolism. In terms of biological role, involved in heme d1 biosynthesis. Catalyzes the decarboxylation of siroheme into didecarboxysiroheme. This is Siroheme decarboxylase NirG subunit from Pseudomonas aeruginosa (strain ATCC 15692 / DSM 22644 / CIP 104116 / JCM 14847 / LMG 12228 / 1C / PRS 101 / PAO1).